We begin with the raw amino-acid sequence, 320 residues long: Eukaryotic translation initiation factor 3 subunit G (320 aa).

Residues 1 to 60 (MPTGDFDSKPSWADQVEEEGEDDKCVTSELLKGIPLPTGDTSPEPELLPGDPLPPPKEVI) form a disordered region. A phosphoserine mark is found at Ser-8 and Ser-11. Phosphothreonine occurs at positions 38 and 41. Residues Ser-42, Ser-189, Ser-223, and Ser-264 each carry the phosphoserine modification. A disordered region spans residues 204–233 (QAAQSKTGKYVPPSLRDGASRRGESMQPNR). The span at 221–233 (GASRRGESMQPNR) shows a compositional bias: basic and acidic residues. One can recognise an RRM domain in the interval 239–317 (ATIRVTNLSE…LILNVEWAKP (79 aa)).

It belongs to the eIF-3 subunit G family. As to quaternary structure, component of the eukaryotic translation initiation factor 3 (eIF-3) complex, which is composed of 13 subunits: EIF3A, EIF3B, EIF3C, EIF3D, EIF3E, EIF3F, EIF3G, EIF3H, EIF3I, EIF3J, EIF3K, EIF3L and EIF3M. The eIF-3 complex appears to include 3 stable modules: module A is composed of EIF3A, EIF3B, EIF3G and EIF3I; module B is composed of EIF3F, EIF3H, and EIF3M; and module C is composed of EIF3C, EIF3D, EIF3E, EIF3K and EIF3L. EIF3C of module C binds EIF3B of module A and EIF3H of module B, thereby linking the three modules. EIF3J is a labile subunit that binds to the eIF-3 complex via EIF3B. The eIF-3 complex may interact with RPS6KB1 under conditions of nutrient depletion. Mitogenic stimulation may lead to binding and activation of a complex composed of MTOR and RPTOR, leading to phosphorylation and release of RPS6KB1 and binding of EIF4B to eIF-3. Interacts (via C-terminus) with AIFM1 (via N-terminus). Interacts with DHX33; the interaction is independent of RNA. Post-translationally, phosphorylated. Phosphorylation is enhanced upon serum stimulation.

It is found in the cytoplasm. The protein resides in the nucleus. Its subcellular location is the perinuclear region. RNA-binding component of the eukaryotic translation initiation factor 3 (eIF-3) complex, which is required for several steps in the initiation of protein synthesis. The eIF-3 complex associates with the 40S ribosome and facilitates the recruitment of eIF-1, eIF-1A, eIF-2:GTP:methionyl-tRNAi and eIF-5 to form the 43S pre-initiation complex (43S PIC). The eIF-3 complex stimulates mRNA recruitment to the 43S PIC and scanning of the mRNA for AUG recognition. The eIF-3 complex is also required for disassembly and recycling of post-termination ribosomal complexes and subsequently prevents premature joining of the 40S and 60S ribosomal subunits prior to initiation. The eIF-3 complex specifically targets and initiates translation of a subset of mRNAs involved in cell proliferation, including cell cycling, differentiation and apoptosis, and uses different modes of RNA stem-loop binding to exert either translational activation or repression. This subunit can bind 18S rRNA. This Mus musculus (Mouse) protein is Eukaryotic translation initiation factor 3 subunit G (Eif3g).